The chain runs to 149 residues: UPF0179 protein Hlac_2319 (149 aa).

It belongs to the UPF0179 family.

The chain is UPF0179 protein Hlac_2319 from Halorubrum lacusprofundi (strain ATCC 49239 / DSM 5036 / JCM 8891 / ACAM 34).